Consider the following 170-residue polypeptide: Protein SprT (170 aa).

In terms of domain architecture, SprT-like spans 19 to 163; that stretch reads REKLQQANLR…RCLHCGTSLR (145 aa). Residue His78 coordinates Zn(2+). The active site involves Glu79. His82 is a Zn(2+) binding site.

It belongs to the SprT family. Requires Zn(2+) as cofactor.

It localises to the cytoplasm. The protein is Protein SprT of Erwinia tasmaniensis (strain DSM 17950 / CFBP 7177 / CIP 109463 / NCPPB 4357 / Et1/99).